The following is an 84-amino-acid chain: UPF0410 protein YmgE (84 aa).

3 helical membrane-spanning segments follow: residues Met-1–Met-21, Gly-27–Ala-47, and Gly-58–Phe-78.

This sequence belongs to the UPF0410 family.

It is found in the cell inner membrane. The sequence is that of UPF0410 protein YmgE (ymgE) from Escherichia coli (strain K12).